We begin with the raw amino-acid sequence, 106 residues long: Large ribosomal subunit protein bL21 (106 aa).

Belongs to the bacterial ribosomal protein bL21 family. In terms of assembly, part of the 50S ribosomal subunit. Contacts protein L20.

Its function is as follows. This protein binds to 23S rRNA in the presence of protein L20. The sequence is that of Large ribosomal subunit protein bL21 from Dichelobacter nodosus (strain VCS1703A).